Here is a 514-residue protein sequence, read N- to C-terminus: G-protein coupled receptor Mth (514 aa).

A signal peptide spans 1–24 (MKTLLVLRISTVILVVLVIQKSYA). At 25–218 (DILECDYFDT…CLIVPSITGQ (194 aa)) the chain is on the extracellular side. 5 disulfides stabilise this stretch: Cys29-Cys83, Cys85-Cys90, Cys94-Cys188, Cys95-Cys106, and Cys150-Cys209. Asn45 carries N-linked (GlcNAc...) asparagine glycosylation. Asn109, Asn123, Asn170, and Asn198 each carry an N-linked (GlcNAc...) asparagine glycan. The helical transmembrane segment at 219-239 (TVVMISSLICMVLTIAVYLFV) threads the bilayer. Topologically, residues 240 to 248 (KKLQNLHGK) are cytoplasmic. A helical transmembrane segment spans residues 249–269 (CFICYMVCLFMGYLFLLLDLW). At 270–278 (QISISFCKP) the chain is on the extracellular side. Residues 279–299 (AGFLGYFFVMAAFFWLSVISL) traverse the membrane as a helical segment. The Cytoplasmic portion of the chain corresponds to 300–320 (HLWNTFRGSSHKANRFLFEHR). The helical transmembrane segment at 321–341 (FLAYNTYAWGMAVVLTGITVL) threads the bilayer. Topologically, residues 342–370 (ADNIVENQDWNPRVGHEGHCWIYTQAWSA) are extracellular. The helical transmembrane segment at 371–391 (MLYFYGPMVFLIAFNITMFIL) threads the bilayer. Residues 392–424 (TAKRILGVKKDIQNFAHRQERKQKLNSDKQTYT) lie on the Cytoplasmic side of the membrane. Residues 425-445 (FFLRLFIIMGLSWSLEIGSYF) form a helical membrane-spanning segment. Over 446–454 (SQSNQTWAN) the chain is Extracellular. N-linked (GlcNAc...) asparagine glycosylation occurs at Asn449. The helical transmembrane segment at 455–475 (VFLVADYLNWSQGIIIFILFV) threads the bilayer. Over 476 to 514 (LKRSTWRLLQESIRGEGEEVNNSEEEISLENTTTRNVLL) the chain is Cytoplasmic.

The protein belongs to the G-protein coupled receptor 2 family. Mth subfamily. In terms of assembly, homodimer.

It is found in the cell membrane. In terms of biological role, involved in biological aging and stress response. Essential for adult survival. Required in the presynaptic motor neuron to up-regulate neurotransmitter exocytosis at larval glutamatergic neuromuscular junctions (NMJs). Regulates a step associated with docking and clustering of vesicles at release sites. SP/Acp70A and sun are agonists that activate mth in vitro. This chain is G-protein coupled receptor Mth (mth), found in Drosophila melanogaster (Fruit fly).